The following is a 683-amino-acid chain: Rhophilin-2-B (683 aa).

An REM-1 domain is found at 25 to 99; that stretch reads KSIAQTGRSK…LERLNISVEV (75 aa). The region spanning 110–501 is the BRO1 domain; it reads PLIPLGLKET…TDIFQRLGPL (392 aa). Residues 515–592 form the PDZ domain; sequence KMCITKEDGD…DSIEIQVISI (78 aa).

It belongs to the RHPN family. Interacts with RhoA.

The protein localises to the cytoplasm. The protein resides in the perinuclear region. Binds specifically to GTP-Rho. This Xenopus laevis (African clawed frog) protein is Rhophilin-2-B (rhpn2-b).